Here is a 569-residue protein sequence, read N- to C-terminus: Endonuclease/exonuclease/phosphatase family domain-containing protein 1 (569 aa).

Residues Met-1–His-20 form a disordered region. Residue Gly-2 is the site of N-myristoyl glycine attachment. Over residues Ile-11–His-20 the composition is skewed to basic and acidic residues. Phosphoserine is present on residues Ser-16, Ser-21, and Ser-25. A HhH domain is found at Glu-38 to Tyr-67. Ser-106, Ser-110, Ser-160, and Ser-173 each carry phosphoserine. The segment at Ser-200–Ser-225 is disordered. Positions Pro-202 to Leu-211 are enriched in polar residues. The residue at position 265 (Thr-265) is a Phosphothreonine. A Phosphoserine modification is found at Ser-428. Residues Ser-545–Arg-569 form a disordered region. The segment covering Glu-559–Arg-569 has biased composition (basic and acidic residues).

The protein is Endonuclease/exonuclease/phosphatase family domain-containing protein 1 (EEPD1) of Homo sapiens (Human).